The primary structure comprises 209 residues: Ion-translocating oxidoreductase complex subunit G (209 aa).

Residues 9–29 (GLVLAIFACASTGLVAVTHYL) traverse the membrane as a helical segment. T175 is modified (FMN phosphoryl threonine).

Belongs to the RnfG family. In terms of assembly, the complex is composed of six subunits: RnfA, RnfB, RnfC, RnfD, RnfE and RnfG. FMN serves as cofactor.

Its subcellular location is the cell inner membrane. Its function is as follows. Part of a membrane-bound complex that couples electron transfer with translocation of ions across the membrane. The protein is Ion-translocating oxidoreductase complex subunit G of Vibrio atlanticus (strain LGP32) (Vibrio splendidus (strain Mel32)).